The primary structure comprises 542 residues: Putative CTP synthase (542 aa).

Residues 1 to 277 (MEIDLMKHIQ…HKTILDFFSL (277 aa)) form an amidoligase domain region. S23 contacts CTP. UTP is bound at residue S23. Residues 24-29 (SLGKGV) and D81 each bind ATP. Residues D81 and E151 each contribute to the Mg(2+) site. CTP is bound by residues 158 to 160 (DIE), 198 to 203 (KTKPTQ), and K234. Residues 198–203 (KTKPTQ) and K234 each bind UTP. In terms of domain architecture, Glutamine amidotransferase type-1 spans 310-542 (YVELPDAYKS…LKMSLKIKES (233 aa)). E517 is a catalytic residue.

Belongs to the CTP synthase family. As to quaternary structure, homotetramer.

The catalysed reaction is UTP + L-glutamine + ATP + H2O = CTP + L-glutamate + ADP + phosphate + 2 H(+). The enzyme catalyses L-glutamine + H2O = L-glutamate + NH4(+). It carries out the reaction UTP + NH4(+) + ATP = CTP + ADP + phosphate + 2 H(+). It participates in pyrimidine metabolism; CTP biosynthesis via de novo pathway; CTP from UDP: step 2/2. With respect to regulation, allosterically activated by GTP, when glutamine is the substrate; GTP has no effect on the reaction when ammonia is the substrate. The allosteric effector GTP functions by stabilizing the protein conformation that binds the tetrahedral intermediate(s) formed during glutamine hydrolysis. Inhibited by the product CTP, via allosteric rather than competitive inhibition. Functionally, catalyzes the ATP-dependent amination of UTP to CTP with either L-glutamine or ammonia as the source of nitrogen. Regulates intracellular CTP levels through interactions with the four ribonucleotide triphosphates. The protein is Putative CTP synthase of Ureaplasma parvum serovar 3 (strain ATCC 700970).